The primary structure comprises 319 residues: Ribonuclease Z (319 aa).

Positions 62, 64, 66, 67, 145, 216, and 274 each coordinate Zn(2+). D66 acts as the Proton acceptor in catalysis.

The protein belongs to the RNase Z family. As to quaternary structure, homodimer. Zn(2+) is required as a cofactor.

The enzyme catalyses Endonucleolytic cleavage of RNA, removing extra 3' nucleotides from tRNA precursor, generating 3' termini of tRNAs. A 3'-hydroxy group is left at the tRNA terminus and a 5'-phosphoryl group is left at the trailer molecule.. Its function is as follows. Zinc phosphodiesterase, which displays some tRNA 3'-processing endonuclease activity. Probably involved in tRNA maturation, by removing a 3'-trailer from precursor tRNA. The protein is Ribonuclease Z of Synechococcus sp. (strain CC9902).